The following is a 230-amino-acid chain: Thymidylate kinase (230 aa).

Position 23–30 (23–30 (GIDGAGKT)) interacts with ATP.

The protein belongs to the thymidylate kinase family.

It catalyses the reaction dTMP + ATP = dTDP + ADP. In terms of biological role, phosphorylation of dTMP to form dTDP in both de novo and salvage pathways of dTTP synthesis. The sequence is that of Thymidylate kinase from Ureaplasma parvum serovar 3 (strain ATCC 27815 / 27 / NCTC 11736).